Here is a 93-residue protein sequence, read N- to C-terminus: Small ribosomal subunit protein uS19 (93 aa).

Belongs to the universal ribosomal protein uS19 family.

Functionally, protein S19 forms a complex with S13 that binds strongly to the 16S ribosomal RNA. The protein is Small ribosomal subunit protein uS19 of Dehalococcoides mccartyi (strain ATCC BAA-2100 / JCM 16839 / KCTC 5957 / BAV1).